The primary structure comprises 165 residues: Large ribosomal subunit protein uL10 (165 aa).

It belongs to the universal ribosomal protein uL10 family. In terms of assembly, part of the ribosomal stalk of the 50S ribosomal subunit. The N-terminus interacts with L11 and the large rRNA to form the base of the stalk. The C-terminus forms an elongated spine to which L12 dimers bind in a sequential fashion forming a multimeric L10(L12)X complex.

Its function is as follows. Forms part of the ribosomal stalk, playing a central role in the interaction of the ribosome with GTP-bound translation factors. In Burkholderia ambifaria (strain MC40-6), this protein is Large ribosomal subunit protein uL10.